The chain runs to 112 residues: UPF0122 protein CPR_1686 (112 aa).

This sequence belongs to the UPF0122 family.

Might take part in the signal recognition particle (SRP) pathway. This is inferred from the conservation of its genetic proximity to ftsY/ffh. May be a regulatory protein. The protein is UPF0122 protein CPR_1686 of Clostridium perfringens (strain SM101 / Type A).